The chain runs to 202 residues: Putative chromophore lyase CpcV (202 aa).

The protein belongs to the CpcS/CpeS biliprotein lyase family.

Covalently attaches a chromophore to Cys residue(s) of phycobiliproteins. This is Putative chromophore lyase CpcV (cpcV) from Picosynechococcus sp. (strain ATCC 27264 / PCC 7002 / PR-6) (Agmenellum quadruplicatum).